The chain runs to 357 residues: Holliday junction branch migration complex subunit RuvB (357 aa).

Over residues 1–15 (MAIQSDSLSSLPDSP) the composition is skewed to low complexity. Residues 1–30 (MAIQSDSLSSLPDSPRIVAPQPVSPNEESI) are disordered. Positions 13 to 195 (DSPRIVAPQP…FGIVSRLEFY (183 aa)) are large ATPase domain (RuvB-L). ATP is bound by residues leucine 34, arginine 35, glycine 76, lysine 79, threonine 80, threonine 81, 142–144 (EDF), arginine 185, tyrosine 195, and arginine 232. Residue threonine 80 participates in Mg(2+) binding. The segment at 196–266 (NTDELARIVT…AAGRALAMLD (71 aa)) is small ATPAse domain (RuvB-S). The tract at residues 269–357 (PQGLDVMDRK…SGGTGELFSK (89 aa)) is head domain (RuvB-H). Arginine 305, arginine 324, and arginine 329 together coordinate DNA.

It belongs to the RuvB family. As to quaternary structure, homohexamer. Forms an RuvA(8)-RuvB(12)-Holliday junction (HJ) complex. HJ DNA is sandwiched between 2 RuvA tetramers; dsDNA enters through RuvA and exits via RuvB. An RuvB hexamer assembles on each DNA strand where it exits the tetramer. Each RuvB hexamer is contacted by two RuvA subunits (via domain III) on 2 adjacent RuvB subunits; this complex drives branch migration. In the full resolvosome a probable DNA-RuvA(4)-RuvB(12)-RuvC(2) complex forms which resolves the HJ.

It localises to the cytoplasm. The enzyme catalyses ATP + H2O = ADP + phosphate + H(+). The RuvA-RuvB-RuvC complex processes Holliday junction (HJ) DNA during genetic recombination and DNA repair, while the RuvA-RuvB complex plays an important role in the rescue of blocked DNA replication forks via replication fork reversal (RFR). RuvA specifically binds to HJ cruciform DNA, conferring on it an open structure. The RuvB hexamer acts as an ATP-dependent pump, pulling dsDNA into and through the RuvAB complex. RuvB forms 2 homohexamers on either side of HJ DNA bound by 1 or 2 RuvA tetramers; 4 subunits per hexamer contact DNA at a time. Coordinated motions by a converter formed by DNA-disengaged RuvB subunits stimulates ATP hydrolysis and nucleotide exchange. Immobilization of the converter enables RuvB to convert the ATP-contained energy into a lever motion, pulling 2 nucleotides of DNA out of the RuvA tetramer per ATP hydrolyzed, thus driving DNA branch migration. The RuvB motors rotate together with the DNA substrate, which together with the progressing nucleotide cycle form the mechanistic basis for DNA recombination by continuous HJ branch migration. Branch migration allows RuvC to scan DNA until it finds its consensus sequence, where it cleaves and resolves cruciform DNA. This chain is Holliday junction branch migration complex subunit RuvB, found in Bordetella parapertussis (strain 12822 / ATCC BAA-587 / NCTC 13253).